The primary structure comprises 296 residues: 2-dehydropantoate 2-reductase (296 aa).

NADP(+)-binding positions include 7–12 (GPGAVG), N94, and A120. Position 94 (N94) interacts with substrate. The active-site Proton donor is K175. N179, N183, N193, and S245 together coordinate substrate. Position 257 (E257) interacts with NADP(+).

Belongs to the ketopantoate reductase family.

It is found in the cytoplasm. The catalysed reaction is (R)-pantoate + NADP(+) = 2-dehydropantoate + NADPH + H(+). Its pathway is cofactor biosynthesis; (R)-pantothenate biosynthesis; (R)-pantoate from 3-methyl-2-oxobutanoate: step 2/2. Its function is as follows. Catalyzes the NADPH-dependent reduction of ketopantoate into pantoic acid. This Vibrio cholerae serotype O1 (strain ATCC 39315 / El Tor Inaba N16961) protein is 2-dehydropantoate 2-reductase (panE).